We begin with the raw amino-acid sequence, 405 residues long: S-adenosylmethionine synthase (405 aa).

141 to 146 (GQGSVD) lines the ATP pocket.

It belongs to the AdoMet synthase 2 family. The cofactor is Mg(2+).

The catalysed reaction is L-methionine + ATP + H2O = S-adenosyl-L-methionine + phosphate + diphosphate. The protein operates within amino-acid biosynthesis; S-adenosyl-L-methionine biosynthesis; S-adenosyl-L-methionine from L-methionine: step 1/1. Its function is as follows. Catalyzes the formation of S-adenosylmethionine from methionine and ATP. The chain is S-adenosylmethionine synthase from Methanococcus maripaludis (Methanococcus deltae).